Consider the following 119-residue polypeptide: Ribonuclease P protein component (119 aa).

It belongs to the RnpA family. In terms of assembly, consists of a catalytic RNA component (M1 or rnpB) and a protein subunit.

The enzyme catalyses Endonucleolytic cleavage of RNA, removing 5'-extranucleotides from tRNA precursor.. RNaseP catalyzes the removal of the 5'-leader sequence from pre-tRNA to produce the mature 5'-terminus. It can also cleave other RNA substrates such as 4.5S RNA. The protein component plays an auxiliary but essential role in vivo by binding to the 5'-leader sequence and broadening the substrate specificity of the ribozyme. This Salmonella arizonae (strain ATCC BAA-731 / CDC346-86 / RSK2980) protein is Ribonuclease P protein component.